Here is a 220-residue protein sequence, read N- to C-terminus: UPF0502 protein Pnap_3223 (220 aa).

It belongs to the UPF0502 family.

This Polaromonas naphthalenivorans (strain CJ2) protein is UPF0502 protein Pnap_3223.